The primary structure comprises 521 residues: AAA ATPase forming ring-shaped complexes (521 aa).

A coiled-coil region spans residues 4 to 44 (TEDLAALNDRLMAKNHALAEALSRAGKELTKAKSQLAQLAQ). ATP is bound at residue 235 to 240 (GNGKTM).

It belongs to the AAA ATPase family. In terms of assembly, homohexamer. Assembles into a hexameric ring structure.

The polypeptide is AAA ATPase forming ring-shaped complexes (Bifidobacterium longum (strain NCC 2705)).